A 153-amino-acid polypeptide reads, in one-letter code: Large ribosomal subunit protein uL13 (153 aa).

The tract at residues 128–153 (SEHPHEAQSPEVLDVTSMNSKNTRSA) is disordered. Positions 143–153 (TSMNSKNTRSA) are enriched in polar residues.

It belongs to the universal ribosomal protein uL13 family. As to quaternary structure, part of the 50S ribosomal subunit.

In terms of biological role, this protein is one of the early assembly proteins of the 50S ribosomal subunit, although it is not seen to bind rRNA by itself. It is important during the early stages of 50S assembly. The protein is Large ribosomal subunit protein uL13 of Roseobacter denitrificans (strain ATCC 33942 / OCh 114) (Erythrobacter sp. (strain OCh 114)).